Here is a 75-residue protein sequence, read N- to C-terminus: Small integral membrane protein 7-A (75 aa).

Residues 1-17 (MIGDLLLFGTLLVNAGA) form the signal peptide. The Extracellular portion of the chain corresponds to 18 to 53 (VLNFKLKKKESQGFGDDLTEATTGDNIREFLLSLRY). A helical transmembrane segment spans residues 54–74 (FRIFIALWNIFMMFCMIVLFG). A topological domain (cytoplasmic) is located at residue S75.

The protein belongs to the SMIM7 family.

It localises to the membrane. This is Small integral membrane protein 7-A (smim7-a) from Xenopus laevis (African clawed frog).